The sequence spans 270 residues: L-fucose dehydrogenase (270 aa).

NAD(+)-binding residues include arginine 19, isoleucine 21, aspartate 40, lysine 41, aspartate 62, valine 63, asparagine 89, tyrosine 154, lysine 158, isoleucine 187, threonine 189, and leucine 191. Tyrosine 154 acts as the Proton acceptor in catalysis.

The protein belongs to the short-chain dehydrogenases/reductases (SDR) family. As to quaternary structure, homotetramer. Highly expressed in brain, placenta, liver and kidney.

It is found in the cytoplasm. The catalysed reaction is L-fucose + NAD(+) = L-fucono-1,5-lactone + NADH + H(+). It carries out the reaction D-arabinose + NAD(+) = D-arabinono-1,5-lactone + NADH + H(+). The enzyme catalyses L-galactose + NAD(+) = L-galactono-1,5-lactone + NADH + H(+). It functions in the pathway carbohydrate degradation; L-fucose degradation. In terms of biological role, catalyzes the NAD(+)-dependent oxidation of L-fucose, yielding L-fucono-1,5-lactone, which rapidly converts spontaneously to L-fucone-1,4-lactone. Can also act on D-arabinose and L-galactose, with lower catalytic efficiency. Does not use NADPH. May be the initial enzyme of the L-fucose degradation pathway in mammals. The chain is L-fucose dehydrogenase from Homo sapiens (Human).